Reading from the N-terminus, the 336-residue chain is D-erythrose-4-phosphate dehydrogenase (336 aa).

Residues 11-12 (RI) and Arg80 contribute to the NAD(+) site. Substrate contacts are provided by residues 153–155 (SCT), Arg199, 212–213 (TK), and Arg235. Catalysis depends on Cys154, which acts as the Nucleophile. NAD(+) is bound at residue Asn317.

This sequence belongs to the glyceraldehyde-3-phosphate dehydrogenase family. Epd subfamily. Homotetramer.

Its subcellular location is the cytoplasm. The catalysed reaction is D-erythrose 4-phosphate + NAD(+) + H2O = 4-phospho-D-erythronate + NADH + 2 H(+). It functions in the pathway cofactor biosynthesis; pyridoxine 5'-phosphate biosynthesis; pyridoxine 5'-phosphate from D-erythrose 4-phosphate: step 1/5. Functionally, catalyzes the NAD-dependent conversion of D-erythrose 4-phosphate to 4-phosphoerythronate. The chain is D-erythrose-4-phosphate dehydrogenase from Aeromonas hydrophila subsp. hydrophila (strain ATCC 7966 / DSM 30187 / BCRC 13018 / CCUG 14551 / JCM 1027 / KCTC 2358 / NCIMB 9240 / NCTC 8049).